Reading from the N-terminus, the 870-residue chain is DNA topoisomerase 1 (870 aa).

The region spanning 1–128 (MKSPRFRHSQ…RVYKSSFEAA (128 aa)) is the Toprim domain. A Topo IA-type catalytic domain is found at 143 to 578 (YDGLAYSAKA…QTNAFVQKIT (436 aa)). An interaction with DNA region spans residues 180-185 (SSGRVQ). Tyr299 serves as the catalytic O-(5'-phospho-DNA)-tyrosine intermediate. C4-type zinc fingers lie at residues 603 to 627 (CQCP…HPNC), 693 to 717 (CPKC…QNGC), and 784 to 807 (CPLC…KRGC).

It belongs to the type IA topoisomerase family. In terms of assembly, monomer.

The enzyme catalyses ATP-independent breakage of single-stranded DNA, followed by passage and rejoining.. Its function is as follows. Releases the supercoiling and torsional tension of DNA, which is introduced during the DNA replication and transcription, by transiently cleaving and rejoining one strand of the DNA duplex. Introduces a single-strand break via transesterification at a target site in duplex DNA. The scissile phosphodiester is attacked by the catalytic tyrosine of the enzyme, resulting in the formation of a DNA-(5'-phosphotyrosyl)-enzyme intermediate and the expulsion of a 3'-OH DNA strand. The free DNA strand then undergoes passage around the unbroken strand, thus removing DNA supercoils. Finally, in the religation step, the DNA 3'-OH attacks the covalent intermediate to expel the active-site tyrosine and restore the DNA phosphodiester backbone. This Bacillus anthracis protein is DNA topoisomerase 1 (topX).